Reading from the N-terminus, the 129-residue chain is MAKEPARVKRRERKNITSGVAHVNASFNNTMITITDAQGNTISWSSAGMMGFKGSRKSTPYAAQMAAEDAGKKAAEHGVKTLEVNVSGPGSGRESALRALQAAGMTITTIRDVTPIPHNGCRPPKRRRV.

It belongs to the universal ribosomal protein uS11 family. As to quaternary structure, part of the 30S ribosomal subunit. Interacts with proteins S7 and S18. Binds to IF-3.

In terms of biological role, located on the platform of the 30S subunit, it bridges several disparate RNA helices of the 16S rRNA. Forms part of the Shine-Dalgarno cleft in the 70S ribosome. This chain is Small ribosomal subunit protein uS11, found in Caulobacter vibrioides (strain ATCC 19089 / CIP 103742 / CB 15) (Caulobacter crescentus).